The sequence spans 621 residues: Very-long-chain aldehyde decarbonylase GL1-5 (621 aa).

The next 5 membrane-spanning stretches (helical) occupy residues 99 to 119 (IILS…GQHL), 126 to 146 (GAGL…YWFH), 186 to 206 (LLFS…IIAF), 224 to 244 (FELV…LMYT), and 332 to 352 (MWPL…SFTV). One can recognise a Fatty acid hydroxylase domain in the interval 138-272 (VEFLYYWFHR…MPFYDYIYNT (135 aa)).

Belongs to the sterol desaturase family. As to quaternary structure, homodimer.

The protein localises to the endoplasmic reticulum membrane. The enzyme catalyses a long-chain fatty aldehyde + 2 NADPH + O2 + H(+) = a long-chain alkane + formate + 2 NADP(+) + H2O. Functionally, aldehyde decarbonylase involved in the conversion of aldehydes to alkanes. Core component of a very-long-chain alkane synthesis complex. In Oryza sativa subsp. indica (Rice), this protein is Very-long-chain aldehyde decarbonylase GL1-5.